Here is a 113-residue protein sequence, read N- to C-terminus: Endoribonuclease SymE (113 aa).

Residues 29 to 74 form the SpoVT-AbrB domain; that stretch reads SRYPDYSRIPAITLKGQWLEAAGFATGTAVVVKVMEGCIVLTAQPA.

It belongs to the SymE family.

The protein localises to the cytoplasm. In terms of biological role, involved in the degradation and recycling of damaged RNA. It is itself a target for degradation by the ATP-dependent protease Lon. This is Endoribonuclease SymE from Escherichia coli (strain ATCC 8739 / DSM 1576 / NBRC 3972 / NCIMB 8545 / WDCM 00012 / Crooks).